The chain runs to 132 residues: Large ribosomal subunit protein uL14 (132 aa).

This sequence belongs to the universal ribosomal protein uL14 family. As to quaternary structure, part of the 50S ribosomal subunit. Forms a cluster with proteins L3 and L24e, part of which may contact the 16S rRNA in 2 intersubunit bridges.

Binds to 23S rRNA. Forms part of two intersubunit bridges in the 70S ribosome. This chain is Large ribosomal subunit protein uL14, found in Archaeoglobus fulgidus (strain ATCC 49558 / DSM 4304 / JCM 9628 / NBRC 100126 / VC-16).